Here is a 138-residue protein sequence, read N- to C-terminus: ATP synthase epsilon chain 1 (138 aa).

Belongs to the ATPase epsilon chain family. In terms of assembly, F-type ATPases have 2 components, CF(1) - the catalytic core - and CF(0) - the membrane proton channel. CF(1) has five subunits: alpha(3), beta(3), gamma(1), delta(1), epsilon(1). CF(0) has three main subunits: a, b and c.

Its subcellular location is the cell inner membrane. Functionally, produces ATP from ADP in the presence of a proton gradient across the membrane. The chain is ATP synthase epsilon chain 1 from Syntrophotalea carbinolica (strain DSM 2380 / NBRC 103641 / GraBd1) (Pelobacter carbinolicus).